Here is a 305-residue protein sequence, read N- to C-terminus: Probable lipid kinase YegS-like (305 aa).

A DAGKc domain is found at 2 to 134 (HPPAPALLII…DLAKVNDQRY (133 aa)). Residues Thr-40, 66–72 (GDGTINE), and Thr-95 contribute to the ATP site. Residues Leu-215, Asp-218, and Leu-220 each contribute to the Mg(2+) site. Glu-271 functions as the Proton acceptor in the catalytic mechanism.

Belongs to the diacylglycerol/lipid kinase family. YegS lipid kinase subfamily. The cofactor is Mg(2+). Ca(2+) is required as a cofactor.

Its subcellular location is the cytoplasm. In terms of biological role, probably phosphorylates lipids; the in vivo substrate is unknown. This is Probable lipid kinase YegS-like from Serratia proteamaculans (strain 568).